The following is a 177-amino-acid chain: Probable DNA-directed RNA polymerase subunit delta (177 aa).

The HTH HARE-type domain maps to 14-83 (LSMIEVARAI…GENKWGLRSW (70 aa)). 2 stretches are compositionally biased toward acidic residues: residues 117–134 (GDDDAIDYGHDDPEDEDN) and 142–157 (EYDDENPDDEKDEVES). A disordered region spans residues 117 to 164 (GDDDAIDYGHDDPEDEDNYPGSVSSEYDDENPDDEKDEVESYDQKSTK).

The protein belongs to the RpoE family. RNAP is composed of a core of 2 alpha, a beta and a beta' subunits. The core is associated with a delta subunit and one of several sigma factors.

Functionally, participates in both the initiation and recycling phases of transcription. In the presence of the delta subunit, RNAP displays an increased specificity of transcription, a decreased affinity for nucleic acids, and an increased efficiency of RNA synthesis because of enhanced recycling. In Streptococcus suis (strain 98HAH33), this protein is Probable DNA-directed RNA polymerase subunit delta.